The primary structure comprises 43 residues: Snaclec lebecetin subunit beta (43 aa).

The C-type lectin domain occupies 1–43 (ALNCASGWSGGYDQHCYKVFDIPPSWAADEKFCKQQTSGGHLV). Cysteines 4 and 16 form a disulfide.

As to quaternary structure, heterodimer of subunits alpha and beta; disulfide-linked. It depends on Ca(2+) as a cofactor. Glycosylated. As to expression, expressed by the venom gland.

The protein localises to the secreted. Its function is as follows. Binds to the platelet GPIb/IX/V receptor system and inhibits ristocetin-induced platelet aggregation in human platelet-rich plasma. Strongly inhibits platelet aggregation induced by ADP, calcium ionophore, thrombin and collagen. Does not inhibit U46619-induced platelet aggregation. The protein is Snaclec lebecetin subunit beta of Macrovipera lebetinus (Levantine viper).